We begin with the raw amino-acid sequence, 272 residues long: Orotidine 5'-phosphate decarboxylase (272 aa).

Residue lysine 96 is the Proton donor of the active site.

The protein belongs to the OMP decarboxylase family. Type 2 subfamily.

The enzyme catalyses orotidine 5'-phosphate + H(+) = UMP + CO2. It functions in the pathway pyrimidine metabolism; UMP biosynthesis via de novo pathway; UMP from orotate: step 2/2. This chain is Orotidine 5'-phosphate decarboxylase, found in Phocaeicola vulgatus (strain ATCC 8482 / DSM 1447 / JCM 5826 / CCUG 4940 / NBRC 14291 / NCTC 11154) (Bacteroides vulgatus).